Consider the following 212-residue polypeptide: uncharacterized protein (212 aa).

The interval 97–151 (SDASEAKNDDRRSDGRFALYSVSDTPETTTASRSADRSTNPKTAKHPKSAAKPTV) is disordered. Positions 100–111 (SEAKNDDRRSDG) are enriched in basic and acidic residues.

This is an uncharacterized protein from Mycobacterium tuberculosis (strain CDC 1551 / Oshkosh).